The following is a 178-amino-acid chain: Bifunctional protein PyrR (178 aa).

The short motif at 99–111 is the PRPP-binding element; the sequence is VVLVDDVIYTGRT.

Belongs to the purine/pyrimidine phosphoribosyltransferase family. PyrR subfamily. As to quaternary structure, homodimer and homohexamer; in equilibrium.

It carries out the reaction UMP + diphosphate = 5-phospho-alpha-D-ribose 1-diphosphate + uracil. Functionally, regulates transcriptional attenuation of the pyrimidine nucleotide (pyr) operon by binding in a uridine-dependent manner to specific sites on pyr mRNA. This disrupts an antiterminator hairpin in the RNA and favors formation of a downstream transcription terminator, leading to a reduced expression of downstream genes. Also displays a weak uracil phosphoribosyltransferase activity which is not physiologically significant. The chain is Bifunctional protein PyrR from Thermoanaerobacter pseudethanolicus (strain ATCC 33223 / 39E) (Clostridium thermohydrosulfuricum).